Reading from the N-terminus, the 266-residue chain is Regulatory protein RecX (266 aa).

It belongs to the RecX family.

It is found in the cytoplasm. In terms of biological role, modulates RecA activity. This chain is Regulatory protein RecX, found in Enterococcus faecalis (strain ATCC 700802 / V583).